Here is a 131-residue protein sequence, read N- to C-terminus: Sec-independent protein translocase protein TatB (131 aa).

The chain crosses the membrane as a helical span at residues 2-22 (FDGIGFMELLLIGILGLVVLG). Composition is skewed to polar residues over residues 68 to 83 (ESQG…QDSI) and 116 to 131 (AEKS…KPNG). The disordered stretch occupies residues 68 to 131 (ESQGLKNLSP…TGANSDKPNG (64 aa)).

Belongs to the TatB family. In terms of assembly, the Tat system comprises two distinct complexes: a TatABC complex, containing multiple copies of TatA, TatB and TatC subunits, and a separate TatA complex, containing only TatA subunits. Substrates initially bind to the TatABC complex, which probably triggers association of the separate TatA complex to form the active translocon.

The protein localises to the cell inner membrane. Part of the twin-arginine translocation (Tat) system that transports large folded proteins containing a characteristic twin-arginine motif in their signal peptide across membranes. Together with TatC, TatB is part of a receptor directly interacting with Tat signal peptides. TatB may form an oligomeric binding site that transiently accommodates folded Tat precursor proteins before their translocation. The polypeptide is Sec-independent protein translocase protein TatB (Shewanella pealeana (strain ATCC 700345 / ANG-SQ1)).